Reading from the N-terminus, the 433-residue chain is Indole diterpene prenyltransferase terF (433 aa).

It belongs to the tryptophan dimethylallyltransferase family.

The protein operates within secondary metabolite biosynthesis. Its function is as follows. Indole diterpene prenyltransferase; part of the gene cluster that mediates the biosynthesis of terpendoles, indole-diterpene (IDT) mycotoxins including terpendole I, terpendole K, terpendole C, as well as the kinesin Eg5 inhibitor terpendole E. Terpendoles biosynthesis begins with the synthesis of geranylgeranyl diphosphate (GGPP) by a yet unidentified GGPP synthase. Condensation of indole-3-glycerol phosphate with GGPP by the prenyltransferase terC then forms 3-geranylgeranylindole (3-GGI), followed by epoxidation and cyclization of this intermediate (by the FAD-dependent monooxygeanse terM and the terpene cyclase terB) to form paspaline. The cytochrome monooxygenase terQ then hydroxylates paspalline at C-11 to yield terpendole E. The cytochrome monooxygenase terP converts terpendole E to 13-desoxyterpendole I, and terQ converts 13-desoxyterpendole I into terpendole I. TerF and terK are required for conversion of terpendole I to terpendole C which is further converted to terpendole K. This chain is Indole diterpene prenyltransferase terF, found in Tolypocladium album (Soil fungus).